The following is a 130-amino-acid chain: Phosphoribosyl-AMP cyclohydrolase (130 aa).

Residue aspartate 77 coordinates Mg(2+). Residue cysteine 78 participates in Zn(2+) binding. Positions 79 and 81 each coordinate Mg(2+). 2 residues coordinate Zn(2+): cysteine 95 and cysteine 102.

This sequence belongs to the PRA-CH family. As to quaternary structure, homodimer. The cofactor is Mg(2+). Zn(2+) is required as a cofactor.

It localises to the cytoplasm. The catalysed reaction is 1-(5-phospho-beta-D-ribosyl)-5'-AMP + H2O = 1-(5-phospho-beta-D-ribosyl)-5-[(5-phospho-beta-D-ribosylamino)methylideneamino]imidazole-4-carboxamide. It functions in the pathway amino-acid biosynthesis; L-histidine biosynthesis; L-histidine from 5-phospho-alpha-D-ribose 1-diphosphate: step 3/9. Functionally, catalyzes the hydrolysis of the adenine ring of phosphoribosyl-AMP. The polypeptide is Phosphoribosyl-AMP cyclohydrolase (Pseudomonas putida (strain ATCC 700007 / DSM 6899 / JCM 31910 / BCRC 17059 / LMG 24140 / F1)).